A 5541-amino-acid polypeptide reads, in one-letter code: Malpibaldin synthetase (5541 aa).

Residues 1–13 are compositionally biased toward basic and acidic residues; sequence MGDKRPDGIKSAE. The segment at 1–26 is disordered; the sequence is MGDKRPDGIKSAESHGQPSAPFGAEN. Positions 137–378 are condensation 1; the sequence is KEDDIARDES…IDIISPAEKT (242 aa). Positions 401-799 are adenylation 1; sequence FEEQVDKSPD…GRNDDQVKIR (399 aa). Positions 901–975 constitute a Carrier 1 domain; sequence VPCGETEDAI…VLAQDLSKHQ (75 aa). An O-(pantetheine 4'-phosphoryl)serine modification is found at Ser-936. The dual epimerase/condensation (E/C) domain 1 stretch occupies residues 1021–1469; sequence QDVYSLAPLQ…LPLDERTKLL (449 aa). Residues 1489–1899 are adenylation 2; that stretch reads FEQQVKQSPI…GRNDDQIKIR (411 aa). The Carrier 2 domain maps to 2001-2075; that stretch reads SPQGRIECAL…SFAQAFKGQL (75 aa). O-(pantetheine 4'-phosphoryl)serine is present on Ser-2036. The interval 2095 to 2537 is condensation 2; it reads ELSFSQQRLW…LGSTEEELLL (443 aa). Positions 2557–2956 are adenylation 3; that stretch reads FEDQVERSPD…GRNDDQVKIR (400 aa). Residues 3058 to 3132 form the Carrier 3 domain; the sequence is EPQGEVEMKL…VLAASITRGC (75 aa). Position 3093 is an O-(pantetheine 4'-phosphoryl)serine (Ser-3093). The segment at 3182-3616 is dual epimerase/condensation (E/C) domain 2; it reads QDIYSLSPLQ…VIPAEEHDLL (435 aa). The tract at residues 3637–4038 is adenylation 4; the sequence is FENQVRERPE…GRNDEQVKIR (402 aa). The Carrier 4 domain occupies 4140-4214; the sequence is APRGDIEISL…VLAASLNTHQ (75 aa). Ser-4175 carries the O-(pantetheine 4'-phosphoryl)serine modification. A dual epimerase/condensation (E/C) domain 3 region spans residues 4260–4695; the sequence is VQDVYSLSPL…VIPAEEHDLL (436 aa). Residues 4716–5117 are adenylation 5; the sequence is FENQVRERPE…GRNDEQVKIR (402 aa). The region spanning 5219–5294 is the Carrier 5 domain; the sequence is LPSGDVEIGL…ELAQKLVQGG (76 aa). Ser-5254 is subject to O-(pantetheine 4'-phosphoryl)serine. A thioesterase (TE) domain region spans residues 5315–5523; it reads PLFCIHSGLG…VECTHIEMDK (209 aa).

It belongs to the NRP synthetase family.

Its function is as follows. Nonribosomal peptide synthetase that catalyzes the biosynthesis of the hydrophobic cyclopentapeptides malpibaldins, natural products that show biosurfactant activities. Module 3 shows promiscuous adenylation (accepting either Trp, Phe or Tyr) leading to the parallel production of multiple products from one NRPS assembly line, including malpibaldin A corresponding to cyclo(-L-Leu-D-Leu-D-Phe-L-Leu-D-Val-), malpibaldin B corresponding to cyclo(-L-Leu-D-Leu-D-Tyr-L-Leu-D-Val-) and malpibaldin C corresponding to cyclo(-Leu-Leu-Trp-Leu-Val-). This chain is Malpibaldin synthetase, found in Mortierella alpina (Oleaginous fungus).